Reading from the N-terminus, the 288-residue chain is Phosphatidylserine decarboxylase proenzyme (288 aa).

Residues Asp92, His149, and Ser254 each act as charge relay system; for autoendoproteolytic cleavage activity in the active site. The Schiff-base intermediate with substrate; via pyruvic acid; for decarboxylase activity role is filled by Ser254. Residue Ser254 is modified to Pyruvic acid (Ser); by autocatalysis.

The protein belongs to the phosphatidylserine decarboxylase family. PSD-B subfamily. Prokaryotic type I sub-subfamily. In terms of assembly, heterodimer of a large membrane-associated beta subunit and a small pyruvoyl-containing alpha subunit. The cofactor is pyruvate. Is synthesized initially as an inactive proenzyme. Formation of the active enzyme involves a self-maturation process in which the active site pyruvoyl group is generated from an internal serine residue via an autocatalytic post-translational modification. Two non-identical subunits are generated from the proenzyme in this reaction, and the pyruvate is formed at the N-terminus of the alpha chain, which is derived from the carboxyl end of the proenzyme. The autoendoproteolytic cleavage occurs by a canonical serine protease mechanism, in which the side chain hydroxyl group of the serine supplies its oxygen atom to form the C-terminus of the beta chain, while the remainder of the serine residue undergoes an oxidative deamination to produce ammonia and the pyruvoyl prosthetic group on the alpha chain. During this reaction, the Ser that is part of the protease active site of the proenzyme becomes the pyruvoyl prosthetic group, which constitutes an essential element of the active site of the mature decarboxylase.

Its subcellular location is the cell membrane. The catalysed reaction is a 1,2-diacyl-sn-glycero-3-phospho-L-serine + H(+) = a 1,2-diacyl-sn-glycero-3-phosphoethanolamine + CO2. The protein operates within phospholipid metabolism; phosphatidylethanolamine biosynthesis; phosphatidylethanolamine from CDP-diacylglycerol: step 2/2. Functionally, catalyzes the formation of phosphatidylethanolamine (PtdEtn) from phosphatidylserine (PtdSer). In Bordetella petrii (strain ATCC BAA-461 / DSM 12804 / CCUG 43448), this protein is Phosphatidylserine decarboxylase proenzyme.